Consider the following 61-residue polypeptide: Tubulin alpha-4 chain (61 aa).

Q11 is a GTP binding site. Residues 35–61 form a disordered region; the sequence is QMPGDKTIGGGDAEFDEGEDGDEGDEY. At K40 the chain carries N6-acetyllysine. Positions 47-61 are enriched in acidic residues; sequence AEFDEGEDGDEGDEY.

Belongs to the tubulin family. Dimer of alpha and beta chains. A typical microtubule is a hollow water-filled tube with an outer diameter of 25 nm and an inner diameter of 15 nM. Alpha-beta heterodimers associate head-to-tail to form protofilaments running lengthwise along the microtubule wall with the beta-tubulin subunit facing the microtubule plus end conferring a structural polarity. Microtubules usually have 13 protofilaments but different protofilament numbers can be found in some organisms and specialized cells. The cofactor is Mg(2+). Post-translationally, undergoes a tyrosination/detyrosination cycle, the cyclic removal and re-addition of a C-terminal tyrosine residue by the enzymes tubulin tyrosine carboxypeptidase (TTCP) and tubulin tyrosine ligase (TTL), respectively. In terms of processing, acetylation of alpha chains at Lys-40 stabilizes microtubules and affects affinity and processivity of microtubule motors. This modification has a role in multiple cellular functions, ranging from cell motility, cell cycle progression or cell differentiation to intracellular trafficking and signaling.

It is found in the cytoplasm. The protein resides in the cytoskeleton. The catalysed reaction is GTP + H2O = GDP + phosphate + H(+). In terms of biological role, tubulin is the major constituent of microtubules, a cylinder consisting of laterally associated linear protofilaments composed of alpha- and beta-tubulin heterodimers. Microtubules grow by the addition of GTP-tubulin dimers to the microtubule end, where a stabilizing cap forms. Below the cap, tubulin dimers are in GDP-bound state, owing to GTPase activity of alpha-tubulin. This Zea mays (Maize) protein is Tubulin alpha-4 chain (TUBA4).